The primary structure comprises 2335 residues: Histone-lysine N-methyltransferase ATXR3 (2335 aa).

Disordered stretches follow at residues asparagine 30–glutamate 142, serine 332–aspartate 355, cysteine 371–lysine 556, and aspartate 902–threonine 961. Composition is skewed to polar residues over residues glutamate 31–alanine 46 and glutamine 53–serine 62. The span at valine 65 to glutamine 84 shows a compositional bias: basic residues. A Nuclear localization signal 1 motif is present at residues lysine 67–isoleucine 74. Positions proline 97–isoleucine 112 are enriched in polar residues. 3 stretches are compositionally biased toward basic and acidic residues: residues histidine 340–tyrosine 353, cysteine 371–arginine 390, and tryptophan 430–serine 452. The span at histidine 461–tyrosine 475 shows a compositional bias: basic residues. Composition is skewed to basic and acidic residues over residues serine 485–tyrosine 498, glutamine 507–glycine 548, and proline 910–proline 921. The short motif at glutamate 527 to glycine 534 is the Nuclear localization signal 2 element. The span at serine 922–serine 932 shows a compositional bias: low complexity. Residues serine 941–threonine 961 show a composition bias toward polar residues. Positions alanine 1382–leucine 1389 match the Nuclear localization signal 3 motif. Residues asparagine 1532–arginine 1572 form a disordered region. Residues serine 1535–serine 1547 show a composition bias toward low complexity. The region spanning lysine 1765–asparagine 1904 is the SET domain. Zn(2+) is bound at residue cysteine 1868. Residue tyrosine 1903 coordinates S-adenosyl-L-methionine. The 17-residue stretch at glutamate 1914–leucine 1930 folds into the Post-SET domain. Positions 1918, 1920, and 1925 each coordinate Zn(2+).

It belongs to the class V-like SAM-binding methyltransferase superfamily. Histone-lysine methyltransferase family. TRX/MLL subfamily. As to expression, expressed in roots, leaves, stems and inflorescences.

Its subcellular location is the nucleus. It catalyses the reaction L-lysyl(4)-[histone H3] + 3 S-adenosyl-L-methionine = N(6),N(6),N(6)-trimethyl-L-lysyl(4)-[histone H3] + 3 S-adenosyl-L-homocysteine + 3 H(+). Histone methyltransferase specifically required for trimethylation of 'Lys-4' of histone H3 (H3K4me3) and is crucial for both sporophyte and gametophyte development. Function as a diurnal 'writer' to counteract the nocturne 'eraser' demethylase activity of JMJ14 thus orchestrating the circadian rhythm of histone modifications (e.g. H3K4me3) and modulating the rhythmic expression of diurnal target genes; this mechanism relies also on the circadian clock oscillators CCA1 and LHY. The chain is Histone-lysine N-methyltransferase ATXR3 from Arabidopsis thaliana (Mouse-ear cress).